Consider the following 914-residue polypeptide: Sensor protein TorS (914 aa).

Residues 1-8 (MNLTLTRR) are Cytoplasmic-facing. The chain crosses the membrane as a helical span at residues 9–29 (LWMGFALMALLTLTSTLVGWY). Residues 30–332 (NLRFISQVEK…EKASARGQYS (303 aa)) lie on the Periplasmic side of the membrane. A helical membrane pass occupies residues 333 to 353 (LLLLGMVSLCALILILWRVVY). An HAMP domain is found at 354-407 (RSVTRPLAEQTQALQRLLDGDIDSPFPETAGVRELDTIGRLMDAFRSNVHALNR). The Cytoplasmic segment spans residues 354-914 (RSVTRPLAEQ…WLHKKDLNAI (561 aa)). The region spanning 450–664 (AMSHEIRTPL…CFCLRLPLRV (215 aa)) is the Histidine kinase domain. Residue His453 is modified to Phosphohistidine; by autocatalysis. Residues 683-798 (RLLLIEDNPL…VLGQLLAHYL (116 aa)) enclose the Response regulatory domain. Position 733 is a 4-aspartylphosphate (Asp733). In terms of domain architecture, HPt spans 821-914 (GTEKIHEWLV…WLHKKDLNAI (94 aa)). Residue His860 is modified to Phosphohistidine.

May form homomultimers. Seems to interact with TorT and TorC apocytochrome. Post-translationally, activation requires a sequential transfer of a phosphate group from a His in the primary transmitter domain, to an Asp in the receiver domain and to a His in the secondary transmitter domain.

The protein localises to the cell inner membrane. The catalysed reaction is ATP + protein L-histidine = ADP + protein N-phospho-L-histidine.. Its activity is regulated as follows. Inhibited by TorC apocytochrome. Its function is as follows. Member of the two-component regulatory system TorS/TorR involved in the anaerobic utilization of trimethylamine-N-oxide (TMAO). Detects the presence of TMAO in the medium and, in response, activates TorR via a four-step phosphorelay. When TMAO is removed, TorS can dephosphorylate TorR, probably by a reverse phosphorelay involving His-860 and Asp-733. The protein is Sensor protein TorS (torS) of Escherichia coli (strain K12).